The sequence spans 515 residues: 2-isopropylmalate synthase (515 aa).

A Pyruvate carboxyltransferase domain is found at 4-266; that stretch reads IKIFDTTLRD…ETGLILKETK (263 aa). 4 residues coordinate Mn(2+): aspartate 13, histidine 201, histidine 203, and asparagine 237. The segment at 392–515 is regulatory domain; it reads KLIQFGVSYD…ANLTRLVYES (124 aa).

It belongs to the alpha-IPM synthase/homocitrate synthase family. LeuA type 1 subfamily. Homodimer. Mn(2+) is required as a cofactor.

It is found in the cytoplasm. It carries out the reaction 3-methyl-2-oxobutanoate + acetyl-CoA + H2O = (2S)-2-isopropylmalate + CoA + H(+). It functions in the pathway amino-acid biosynthesis; L-leucine biosynthesis; L-leucine from 3-methyl-2-oxobutanoate: step 1/4. Catalyzes the condensation of the acetyl group of acetyl-CoA with 3-methyl-2-oxobutanoate (2-ketoisovalerate) to form 3-carboxy-3-hydroxy-4-methylpentanoate (2-isopropylmalate). The polypeptide is 2-isopropylmalate synthase (Oceanobacillus iheyensis (strain DSM 14371 / CIP 107618 / JCM 11309 / KCTC 3954 / HTE831)).